A 421-amino-acid polypeptide reads, in one-letter code: Non-homologous end-joining factor LIF1 (421 aa).

The segment at 1–196 (MSQLTEFISC…VEQLAREREL (196 aa)) is interaction with NEJ1. The segment at 365 to 421 (GIQISAGRSDEDYGDISGSESETDASAGEKKSSNHSEQSGNDREPCLQTESETDIET) is disordered. A compositionally biased stretch (basic and acidic residues) spans 391–409 (AGEKKSSNHSEQSGNDREP).

Belongs to the XRCC4-XLF family. XLF subfamily. Interacts with DNL4 (via BRCT domain). Interacts (via N-terminus) with NEJ1 (via C-terminus); the interaction is direct. The DNL4-LIF1 complex interacts with POL4.

The protein localises to the cytoplasm. Its subcellular location is the nucleus. Involved in non-homologous repair of DNA double-strand breaks. Stabilizes DNL4. The sequence is that of Non-homologous end-joining factor LIF1 (LIF1) from Saccharomyces cerevisiae (strain ATCC 204508 / S288c) (Baker's yeast).